The primary structure comprises 173 residues: MPSNQNRDNFIDKAFTVIAESIVKIMPIEEKEKKAYIYYRDGLAAQNNGDYSEALEYYKESLLLEENKIDRGETLKNMAIIFMSNGEEDLSIETYEKALVENPKQPSCLKNIGLIYEKRGRNAEQNGDLDQRDIWFDKAAEVWTKAVKLYPGGYLDIENWLKNSGRSSIDMYL.

TPR repeat units follow at residues 35–68, 72–105, and 120–153; these read AYIY…EENK, GETL…NPKQ, and GRNA…YPGG.

Belongs to the Ycf3 family.

It localises to the cellular thylakoid membrane. Essential for the assembly of the photosystem I (PSI) complex. May act as a chaperone-like factor to guide the assembly of the PSI subunits. The polypeptide is Photosystem I assembly protein Ycf3 (Prochlorococcus marinus (strain MIT 9312)).